Reading from the N-terminus, the 708-residue chain is Chaperonin-containing T-complex member BBS12 (708 aa).

The protein belongs to the TCP-1 chaperonin family. BBS12 subfamily. Component of the chaperonin-containing T-complex (TRiC), a heterooligomeric complex of about 850 to 900 kDa that forms two stacked rings, 12 to 16 nm in diameter. Interacts with MKKS.

The protein localises to the cell projection. The protein resides in the cilium. Functionally, component of the chaperonin-containing T-complex (TRiC), a molecular chaperone complex that assists the folding of proteins upon ATP hydrolysis. As part of the TRiC complex may play a role in the assembly of BBSome, a complex involved in ciliogenesis regulating transports vesicles to the cilia. Involved in adipogenic differentiation. The polypeptide is Chaperonin-containing T-complex member BBS12 (Bbs12) (Mus musculus (Mouse)).